The sequence spans 125 residues: Large ribosomal subunit protein bL12 (125 aa).

Belongs to the bacterial ribosomal protein bL12 family. As to quaternary structure, homodimer. Part of the ribosomal stalk of the 50S ribosomal subunit. Forms a multimeric L10(L12)X complex, where L10 forms an elongated spine to which 2 to 4 L12 dimers bind in a sequential fashion. Binds GTP-bound translation factors.

Forms part of the ribosomal stalk which helps the ribosome interact with GTP-bound translation factors. Is thus essential for accurate translation. This chain is Large ribosomal subunit protein bL12, found in Thermoanaerobacter sp. (strain X514).